We begin with the raw amino-acid sequence, 209 residues long: MSGPERITLAMTGASGAQYGLRLLDCLVQEEREVHFLISKAAQLVMATETDVALPAKPQAMQAFLTEYCGAAAGQIRVFGQNDWMAPPASGSSAPNAMVICPCSTGTLSAVATGACNNLIERAADVALKERRPLVLVPREAPFSSIHLENMLKLSNLGAVILPAAPGFYHQPQSVEDLVDFVVARILNTLGIPQDMLPRWGEQHLVSDE.

Residues 13 to 15 (GAS), Ser39, 104 to 107 (STGT), Cys116, and Arg139 contribute to the FMN site. Residues Tyr169 and Arg185 each coordinate dimethylallyl phosphate.

It belongs to the UbiX/PAD1 family.

It catalyses the reaction dimethylallyl phosphate + FMNH2 = prenylated FMNH2 + phosphate. Its function is as follows. Flavin prenyltransferase that catalyzes the synthesis of the prenylated FMN cofactor (prenyl-FMN) for 4-hydroxy-3-polyprenylbenzoic acid decarboxylase UbiD. The prenyltransferase is metal-independent and links a dimethylallyl moiety from dimethylallyl monophosphate (DMAP) to the flavin N5 and C6 atoms of FMN. This is Flavin prenyltransferase UbiX from Pseudomonas aeruginosa (strain ATCC 15692 / DSM 22644 / CIP 104116 / JCM 14847 / LMG 12228 / 1C / PRS 101 / PAO1).